We begin with the raw amino-acid sequence, 61 residues long: Large ribosomal subunit protein bL32 (61 aa).

Residues 1-22 show a composition bias toward basic residues; the sequence is MAVPKKKTSRARRDRRRSHHAL. The interval 1-24 is disordered; it reads MAVPKKKTSRARRDRRRSHHALRG.

It belongs to the bacterial ribosomal protein bL32 family.

The chain is Large ribosomal subunit protein bL32 from Rubrobacter xylanophilus (strain DSM 9941 / JCM 11954 / NBRC 16129 / PRD-1).